The sequence spans 163 residues: Xanthine-guanine phosphoribosyltransferase (163 aa).

5-phospho-alpha-D-ribose 1-diphosphate-binding positions include 43-44 (RG) and 95-103 (DDLVDTGGT). D96 is a binding site for Mg(2+). The guanine site is built by D99 and I142. Xanthine-binding residues include D99 and I142. GMP-binding positions include 99–103 (DTGGT) and 141–142 (WI).

This sequence belongs to the purine/pyrimidine phosphoribosyltransferase family. XGPT subfamily. In terms of assembly, homotetramer. Requires Mg(2+) as cofactor.

Its subcellular location is the cell inner membrane. The enzyme catalyses GMP + diphosphate = guanine + 5-phospho-alpha-D-ribose 1-diphosphate. It carries out the reaction XMP + diphosphate = xanthine + 5-phospho-alpha-D-ribose 1-diphosphate. The catalysed reaction is IMP + diphosphate = hypoxanthine + 5-phospho-alpha-D-ribose 1-diphosphate. It functions in the pathway purine metabolism; GMP biosynthesis via salvage pathway; GMP from guanine: step 1/1. Its pathway is purine metabolism; XMP biosynthesis via salvage pathway; XMP from xanthine: step 1/1. Functionally, purine salvage pathway enzyme that catalyzes the transfer of the ribosyl-5-phosphate group from 5-phospho-alpha-D-ribose 1-diphosphate (PRPP) to the N9 position of the 6-oxopurines guanine and xanthine to form the corresponding ribonucleotides GMP (guanosine 5'-monophosphate) and XMP (xanthosine 5'-monophosphate), with the release of PPi. To a lesser extent, also acts on hypoxanthine. The chain is Xanthine-guanine phosphoribosyltransferase from Nitratidesulfovibrio vulgaris (strain DP4) (Desulfovibrio vulgaris).